A 201-amino-acid polypeptide reads, in one-letter code: Small ribosomal subunit protein uS4 (201 aa).

Residues 91 to 154 form the S4 RNA-binding domain; the sequence is TRLDNVVYRA…RKMEWFEEAQ (64 aa).

Belongs to the universal ribosomal protein uS4 family. Part of the 30S ribosomal subunit. Contacts protein S5. The interaction surface between S4 and S5 is involved in control of translational fidelity.

One of the primary rRNA binding proteins, it binds directly to 16S rRNA where it nucleates assembly of the body of the 30S subunit. In terms of biological role, with S5 and S12 plays an important role in translational accuracy. This chain is Small ribosomal subunit protein uS4, found in Corynebacterium ammoniagenes (Brevibacterium ammoniagenes).